The chain runs to 409 residues: Multidrug efflux pump Tap (409 aa).

12 helical membrane-spanning segments follow: residues 10 to 30 (LLILFAALTAGAGNGITIVAF), 46 to 66 (IVAMAGTLPLLVATLIAGAAV), 80 to 98 (LLSALSVAAVPVLALIFGV), 104 to 123 (AVLAVLAGLGAFFDPAGMTA), 144 to 168 (SVYEAVFNLGYIVGPGIGGLMIATL), 174 to 193 (MWVTAGAFCCSILAISVLRL), 218 to 240 (FVWYTPVLRTLAIVDLVATGLYM), 260 to 282 (LGWVLMALSIGGLLGALGYAVMS), 289 to 308 (ATMLTAVITLGVAMTVIAFL), 313 to 335 (LILVLCAIVGFVYGPIAPIYNYV), 348 to 370 (VVGVMGSLAYAAGPLGLILAGPL), and 375 to 397 (GLHATFLALSLPMLLLGVVAVFL).

The protein belongs to the major facilitator superfamily. Drug:H(+) antiporter-3 (DHA3) (TC 2.A.1.21) family.

It is found in the cell inner membrane. Its activity is regulated as follows. Efflux activity is inhibited by carbonyl cyanide m-chlorophenylhydrazone (CCCP) and reserpine, but not by o-vanadate or chlorpromazine (CPZ). In terms of biological role, efflux pump that contributes to intrinsic antibiotic resistance. The pump uses the electrochemical gradient as a source of energy. Confers low-level resistance to tetracycline and to several aminoglycosides, including streptomycin, gentamicin, 2'-N-ethylnetilmicin and 6'-N-ethylnetilmicin. The sequence is that of Multidrug efflux pump Tap from Mycolicibacterium fortuitum (Mycobacterium fortuitum).